An 87-amino-acid polypeptide reads, in one-letter code: Small ribosomal subunit protein bS16 (87 aa).

Belongs to the bacterial ribosomal protein bS16 family.

The chain is Small ribosomal subunit protein bS16 from Aster yellows witches'-broom phytoplasma (strain AYWB).